We begin with the raw amino-acid sequence, 444 residues long: Glycogen synthase (444 aa).

Residue Arg-15 participates in ADP-alpha-D-glucose binding.

This sequence belongs to the glycosyltransferase 1 family. Bacterial/plant glycogen synthase subfamily.

It carries out the reaction [(1-&gt;4)-alpha-D-glucosyl](n) + ADP-alpha-D-glucose = [(1-&gt;4)-alpha-D-glucosyl](n+1) + ADP + H(+). It functions in the pathway glycan biosynthesis; glycogen biosynthesis. In terms of biological role, synthesizes alpha-1,4-glucan chains using ADP-glucose. The protein is Glycogen synthase of Deinococcus radiodurans (strain ATCC 13939 / DSM 20539 / JCM 16871 / CCUG 27074 / LMG 4051 / NBRC 15346 / NCIMB 9279 / VKM B-1422 / R1).